Reading from the N-terminus, the 876-residue chain is Alanine--tRNA ligase (876 aa).

4 residues coordinate Zn(2+): His-563, His-567, Cys-665, and His-669.

It belongs to the class-II aminoacyl-tRNA synthetase family. It depends on Zn(2+) as a cofactor.

It localises to the cytoplasm. It catalyses the reaction tRNA(Ala) + L-alanine + ATP = L-alanyl-tRNA(Ala) + AMP + diphosphate. Catalyzes the attachment of alanine to tRNA(Ala) in a two-step reaction: alanine is first activated by ATP to form Ala-AMP and then transferred to the acceptor end of tRNA(Ala). Also edits incorrectly charged Ser-tRNA(Ala) and Gly-tRNA(Ala) via its editing domain. The polypeptide is Alanine--tRNA ligase (Shouchella clausii (strain KSM-K16) (Alkalihalobacillus clausii)).